The chain runs to 118 residues: Probable FK506-binding protein (118 aa).

Residues 33–118 (GGEVEVHYVG…LVFIIDLISA (86 aa)) form the PPIase FKBP-type domain.

The protein belongs to the FKBP-type PPIase family.

The catalysed reaction is [protein]-peptidylproline (omega=180) = [protein]-peptidylproline (omega=0). In terms of biological role, PPIases accelerate the folding of proteins. This Corynebacterium glutamicum (strain ATCC 13032 / DSM 20300 / JCM 1318 / BCRC 11384 / CCUG 27702 / LMG 3730 / NBRC 12168 / NCIMB 10025 / NRRL B-2784 / 534) protein is Probable FK506-binding protein.